Reading from the N-terminus, the 1383-residue chain is Negative regulator of sporulation MDS3 (1383 aa).

Kelch repeat units follow at residues 124–179, 199–246, and 356–402; these read CLYL…SPRF, GLFI…KDKE, and QNVV…WGGF. Residues 450 to 460 show a composition bias toward polar residues; the sequence is GRSNNRTSSFV. Disordered regions lie at residues 450-506, 625-644, 653-825, 858-884, 1063-1114, 1251-1289, and 1321-1369; these read GRSN…VLDA, NQRL…DIPK, LLSS…DLFS, LDSF…SDES, NNSR…VDKE, QLKE…RLPQ, and SMTD…KSSS. Positions 631–644 are enriched in low complexity; sequence KSSNSESSSSDIPK. The segment covering 693–707 has biased composition (basic and acidic residues); sequence VNREEGSDCSKDRKT. 3 stretches are compositionally biased toward low complexity: residues 726-758, 803-815, and 858-874; these read NSTS…EQIP, ESPF…SMSG, and LDSF…VSSV. A compositionally biased stretch (basic and acidic residues) spans 1084–1094; it reads EGEKQEEIVSK. Residues 1251–1280 are compositionally biased toward low complexity; sequence QLKESQLQSKSSPIIPTVSTVTPSPLPSIS. Over residues 1341 to 1352 the composition is skewed to polar residues; sequence LQQTMLSRTPTN.

Interacts with SIT4.

It is found in the cytoplasm. Its function is as follows. Negatively regulates early sporulation-specific genes. TOR signaling pathway component that contributes to morphogenesis as a regulator of this key morphogenetic pathway. Required for growth and hyphal formation at pH 9, for full virulence in a mouse model of systemic infection and for biofilm formation. Involved in chlamydospore formation, distinctive morphological feature of the fungal pathogen C.albicans that can be induced to form in oxygen-limited environments and has been reported in clinical specimens. The chain is Negative regulator of sporulation MDS3 (MDS3) from Candida albicans (strain SC5314 / ATCC MYA-2876) (Yeast).